Here is a 92-residue protein sequence, read N- to C-terminus: Small ribosomal subunit protein bS20 (92 aa).

The protein belongs to the bacterial ribosomal protein bS20 family.

Functionally, binds directly to 16S ribosomal RNA. The sequence is that of Small ribosomal subunit protein bS20 from Persephonella marina (strain DSM 14350 / EX-H1).